Consider the following 306-residue polypeptide: Probable L,D-transpeptidase YbiS (306 aa).

Residues 1 to 24 (MNMKLKTLFAAAFAVVGFCSTASA) form the signal peptide. A L,D-TPase catalytic domain is found at 99–234 (EGIVINSAEM…VPVGTRVQFI (136 aa)). Histidine 194 serves as the catalytic Proton donor/acceptor. Catalysis depends on cysteine 210, which acts as the Nucleophile.

Belongs to the YkuD family.

The protein localises to the periplasm. Its pathway is cell wall biogenesis; peptidoglycan biosynthesis. Responsible, at least in part, for anchoring of the major outer membrane lipoprotein (Lpp) to the peptidoglycan via a meso-diaminopimelyl-L-Lys- bond on the terminal residue of Lpp. The sequence is that of Probable L,D-transpeptidase YbiS (ybiS) from Escherichia coli O6:H1 (strain CFT073 / ATCC 700928 / UPEC).